An 837-amino-acid polypeptide reads, in one-letter code: Translation initiation factor IF-2 (837 aa).

Residues 94–252 (QRSPEEIEAE…NAHGFQSPTG (159 aa)) are disordered. The segment covering 96 to 136 (SPEEIEAERKRELDERRAVENAARQKAEEEARVRAEEEARR) has biased composition (basic and acidic residues). Residues 137–171 (QPAAPSAPAEAVAAPAPVAEPVREAAPVVAAAPAA) are compositionally biased toward low complexity. Composition is skewed to basic and acidic residues over residues 172 to 213 (DTRK…EKAP) and 221 to 230 (TTDEESDGFR). Positions 231–244 (RGGRGKAKLKKRNA) are enriched in basic residues. The tr-type G domain maps to 337-506 (PRAPVVTVMG…LLQAEVLELT (170 aa)). The segment at 346–353 (GHVDHGKT) is G1. GTP is bound at residue 346–353 (GHVDHGKT). The G2 stretch occupies residues 371-375 (GITQH). The G3 stretch occupies residues 392-395 (DTPG). GTP-binding positions include 392 to 396 (DTPGH) and 446 to 449 (NKID). Residues 446–449 (NKID) form a G4 region. Residues 482-484 (SAK) are G5.

This sequence belongs to the TRAFAC class translation factor GTPase superfamily. Classic translation factor GTPase family. IF-2 subfamily.

The protein resides in the cytoplasm. In terms of biological role, one of the essential components for the initiation of protein synthesis. Protects formylmethionyl-tRNA from spontaneous hydrolysis and promotes its binding to the 30S ribosomal subunits. Also involved in the hydrolysis of GTP during the formation of the 70S ribosomal complex. The protein is Translation initiation factor IF-2 of Pseudomonas fluorescens (strain Pf0-1).